The chain runs to 179 residues: Ribosome maturation factor RimM (179 aa).

The PRC barrel domain maps to 97–170 (DGELSWNFFV…LITVELPEGL (74 aa)).

This sequence belongs to the RimM family. In terms of assembly, binds ribosomal protein uS19.

It is found in the cytoplasm. Functionally, an accessory protein needed during the final step in the assembly of 30S ribosomal subunit, possibly for assembly of the head region. Essential for efficient processing of 16S rRNA. May be needed both before and after RbfA during the maturation of 16S rRNA. It has affinity for free ribosomal 30S subunits but not for 70S ribosomes. This chain is Ribosome maturation factor RimM, found in Bacteroides thetaiotaomicron (strain ATCC 29148 / DSM 2079 / JCM 5827 / CCUG 10774 / NCTC 10582 / VPI-5482 / E50).